The sequence spans 334 residues: Mevalonate kinase (334 aa).

ATP is bound at residue 110 to 120 (PVGAGLGSSAA). Aspartate 161 serves as the catalytic Proton acceptor.

The protein belongs to the GHMP kinase family. Mevalonate kinase subfamily. In terms of assembly, homodimer. Mg(2+) is required as a cofactor.

The protein resides in the cytoplasm. The catalysed reaction is (R)-mevalonate + ATP = (R)-5-phosphomevalonate + ADP + H(+). It participates in isoprenoid biosynthesis; isopentenyl diphosphate biosynthesis via mevalonate pathway; isopentenyl diphosphate from (R)-mevalonate: step 1/3. Functionally, catalyzes the phosphorylation of (R)-mevalonate (MVA) to (R)-mevalonate 5-phosphate (MVAP). Functions in the mevalonate (MVA) pathway leading to isopentenyl diphosphate (IPP), a key precursor for the biosynthesis of isoprenoid compounds such as archaeal membrane lipids. This is Mevalonate kinase from Pyrococcus furiosus (strain ATCC 43587 / DSM 3638 / JCM 8422 / Vc1).